The chain runs to 728 residues: Ribosome biogenesis protein bop1-B (728 aa).

Positions 1–114 (MKRGSKRESG…ENDSSDEEDI (114 aa)) are disordered. Acidic residues predominate over residues 50–67 (SGTDSSDDEEDHSSEEVQ). WD repeat units follow at residues 393–432 (GHKDLVRCISVSPSGQWLVSGSDDCSVRFWEVSTGRCMKS), 434–474 (VLEG…RLLC), 514–556 (KHQK…SQNP), 559–597 (KNKGQVQKVLFHPTRPFFFVATQRYVRVYNLLKQELTKK), 600–639 (TNCKWVSSIAVHPAGDNLICGSYDSKLAWFDMDLSTKPYK), 643–682 (HHKKALRAVSFHKSYPLFASGSDDASVIVCHGMVYNDLLQ), and 698–728 (HRDLGVLDVMFHPTQPWVFSSGADGTIRLFT).

This sequence belongs to the WD repeat BOP1/ERB1 family. As to quaternary structure, component of the PeBoW complex, composed of bop1, pes1 and wdr12. The complex is held together by bop1, which interacts with pes1 via its N-terminal domain and with wdr12 via a high-affinity interaction between the seven-bladed beta-propeller domains of the 2 proteins. The PeBoW complex associates with the 66S pre-ribosome.

It is found in the nucleus. Its subcellular location is the nucleolus. It localises to the nucleoplasm. In terms of biological role, component of the PeBoW complex, which is required for maturation of 28S and 5.8S ribosomal RNAs and formation of the 60S ribosome. The protein is Ribosome biogenesis protein bop1-B (bop1-b) of Xenopus laevis (African clawed frog).